The following is a 139-amino-acid chain: Phosphoribosyl-AMP cyclohydrolase (139 aa).

Asp-91 serves as a coordination point for Mg(2+). Residue Cys-92 coordinates Zn(2+). Residues Asp-93 and Asp-95 each coordinate Mg(2+). Zn(2+) is bound by residues Cys-110 and Cys-117.

This sequence belongs to the PRA-CH family. In terms of assembly, homodimer. Mg(2+) is required as a cofactor. Zn(2+) serves as cofactor.

The protein localises to the cytoplasm. The catalysed reaction is 1-(5-phospho-beta-D-ribosyl)-5'-AMP + H2O = 1-(5-phospho-beta-D-ribosyl)-5-[(5-phospho-beta-D-ribosylamino)methylideneamino]imidazole-4-carboxamide. The protein operates within amino-acid biosynthesis; L-histidine biosynthesis; L-histidine from 5-phospho-alpha-D-ribose 1-diphosphate: step 3/9. In terms of biological role, catalyzes the hydrolysis of the adenine ring of phosphoribosyl-AMP. In Brucella abortus (strain S19), this protein is Phosphoribosyl-AMP cyclohydrolase.